The primary structure comprises 235 residues: Succinate dehydrogenase iron-sulfur subunit (235 aa).

Residues cysteine 53, cysteine 58, and cysteine 73 each coordinate [2Fe-2S] cluster. Positions 133-163 (ERAKLDGLYECILCACCSSSCPSYWWNPDKF) constitute a 4Fe-4S ferredoxin-type domain. Positions 143, 146, and 149 each coordinate [4Fe-4S] cluster. Cysteine 153 provides a ligand contact to [3Fe-4S] cluster. Tryptophan 158 contacts a ubiquinone. Cysteine 200 and cysteine 206 together coordinate [3Fe-4S] cluster. [4Fe-4S] cluster is bound at residue cysteine 210.

Belongs to the succinate dehydrogenase/fumarate reductase iron-sulfur protein family. In terms of assembly, part of an enzyme complex containing four subunits: a flavoprotein, an iron-sulfur protein, cytochrome b-556 and a hydrophobic protein. The cofactor is [2Fe-2S] cluster. [3Fe-4S] cluster is required as a cofactor. It depends on [4Fe-4S] cluster as a cofactor.

The catalysed reaction is a quinone + succinate = fumarate + a quinol. It participates in carbohydrate metabolism; tricarboxylic acid cycle; fumarate from succinate (bacterial route): step 1/1. This is Succinate dehydrogenase iron-sulfur subunit (sdhB) from Coxiella burnetii (strain RSA 493 / Nine Mile phase I).